The sequence spans 295 residues: NAD kinase (295 aa).

The active-site Proton acceptor is Asp72. Residues 72 to 73 (DG), 146 to 147 (ND), Arg157, Lys174, Asp176, 187 to 192 (TAYALS), and Gln247 each bind NAD(+).

It belongs to the NAD kinase family. It depends on a divalent metal cation as a cofactor.

It localises to the cytoplasm. It catalyses the reaction NAD(+) + ATP = ADP + NADP(+) + H(+). Its function is as follows. Involved in the regulation of the intracellular balance of NAD and NADP, and is a key enzyme in the biosynthesis of NADP. Catalyzes specifically the phosphorylation on 2'-hydroxyl of the adenosine moiety of NAD to yield NADP. The protein is NAD kinase of Ectopseudomonas mendocina (strain ymp) (Pseudomonas mendocina).